Here is a 369-residue protein sequence, read N- to C-terminus: 3,7-dimethylxanthine N-methyltransferase TCS1 (369 aa).

Residue tyrosine 24 coordinates S-adenosyl-L-homocysteine. Residue threonine 31 participates in caffeine binding. Positions 66, 71, 103, 104, 138, and 139 each coordinate S-adenosyl-L-homocysteine. 3 residues coordinate caffeine: tyrosine 156, histidine 159, and tryptophan 160. Asparagine 177 is a binding site for Mg(2+). A caffeine-binding site is contributed by arginine 225. Residues aspartate 263, phenylalanine 265, and asparagine 266 each coordinate Mg(2+). Phenylalanine 321 provides a ligand contact to caffeine.

Belongs to the methyltransferase superfamily. Type-7 methyltransferase family. Mg(2+) serves as cofactor.

The catalysed reaction is 1,7-dimethylxanthine + S-adenosyl-L-methionine = caffeine + S-adenosyl-L-homocysteine + H(+). It carries out the reaction theobromine + S-adenosyl-L-methionine = caffeine + S-adenosyl-L-homocysteine + H(+). It catalyses the reaction 7-methylxanthine + S-adenosyl-L-methionine = theobromine + S-adenosyl-L-homocysteine + H(+). The protein operates within alkaloid biosynthesis. In terms of biological role, involved in the biosynthesis of caffeine in cv. Puer. Involved in the biosynthesis of theacrine in cv. Kucha, a caffeine-like xanthine alkaloid with diverse beneficial biological activities including anti-depressive, sedative, and hypnotic activities, improving learning and memory, increasing exercise activity, and preventing nonalcoholic fatty liver disease. Catalyzes the conversion of 7-methylxanthine (7mX) to theobromine and of theobromine to caffeine. Has 3-N- and 1-N-methylation activity. In Camellia sinensis var. assamica (Assam tea), this protein is 3,7-dimethylxanthine N-methyltransferase TCS1.